A 1074-amino-acid chain; its full sequence is Transmembrane protein 132E (1074 aa).

The signal sequence occupies residues Met1–Gly25. At Arg26–Ala893 the chain is on the extracellular side. N-linked (GlcNAc...) asparagine glycans are attached at residues Asn70 and Asn91. 2 disordered regions span residues Pro202–Glu226 and Ala241–Thr264. Residues Gly243–Val256 show a composition bias toward gly residues. Asn318 and Asn399 each carry an N-linked (GlcNAc...) asparagine glycan. 2 disordered regions span residues Arg563–Gly585 and Gly814–Thr867. Over residues Gly841–Pro862 the composition is skewed to low complexity. A helical membrane pass occupies residues Leu894–Leu914. The Cytoplasmic portion of the chain corresponds to Arg915–Ala1074. The tract at residues Val946–Leu1063 is disordered. The segment covering Ser972–His984 has biased composition (low complexity). Positions Gly1034–Leu1044 are enriched in acidic residues.

This sequence belongs to the TMEM132 family.

It is found in the membrane. In terms of biological role, required for normal inner ear hair cell function and hearing. The polypeptide is Transmembrane protein 132E (Homo sapiens (Human)).